The chain runs to 83 residues: uncharacterized protein (83 aa).

A run of 2 helical transmembrane segments spans residues Phe11–Leu31 and Trp48–Met68.

Its subcellular location is the cell membrane. This is an uncharacterized protein from Bacillus subtilis (strain 168).